The following is a 723-amino-acid chain: Fatty acid oxidation complex subunit alpha (723 aa).

The enoyl-CoA hydratase/isomerase stretch occupies residues 1 to 189 (MIYQAETLQV…KIGLLDAVVD (189 aa)). D296 serves as a coordination point for substrate. The interval 311 to 723 (NKETQRAAVL…FYGAQQQGSI (413 aa)) is 3-hydroxyacyl-CoA dehydrogenase. Residues M325, D344, 401-403 (VVE), K408, and S430 each bind NAD(+). The active-site For 3-hydroxyacyl-CoA dehydrogenase activity is the H451. An NAD(+)-binding site is contributed by N454. Residues N501 and Y661 each contribute to the substrate site.

The protein in the N-terminal section; belongs to the enoyl-CoA hydratase/isomerase family. This sequence in the C-terminal section; belongs to the 3-hydroxyacyl-CoA dehydrogenase family. In terms of assembly, heterotetramer of two alpha chains (FadB) and two beta chains (FadA).

It catalyses the reaction a (3S)-3-hydroxyacyl-CoA + NAD(+) = a 3-oxoacyl-CoA + NADH + H(+). The catalysed reaction is a (3S)-3-hydroxyacyl-CoA = a (2E)-enoyl-CoA + H2O. It carries out the reaction a 4-saturated-(3S)-3-hydroxyacyl-CoA = a (3E)-enoyl-CoA + H2O. The enzyme catalyses (3S)-3-hydroxybutanoyl-CoA = (3R)-3-hydroxybutanoyl-CoA. It catalyses the reaction a (3Z)-enoyl-CoA = a 4-saturated (2E)-enoyl-CoA. The catalysed reaction is a (3E)-enoyl-CoA = a 4-saturated (2E)-enoyl-CoA. The protein operates within lipid metabolism; fatty acid beta-oxidation. Functionally, involved in the aerobic and anaerobic degradation of long-chain fatty acids via beta-oxidation cycle. Catalyzes the formation of 3-oxoacyl-CoA from enoyl-CoA via L-3-hydroxyacyl-CoA. It can also use D-3-hydroxyacyl-CoA and cis-3-enoyl-CoA as substrate. This chain is Fatty acid oxidation complex subunit alpha, found in Vibrio vulnificus (strain YJ016).